Consider the following 395-residue polypeptide: Innexin inx3 (395 aa).

Topologically, residues M1–T37 are cytoplasmic. A helical membrane pass occupies residues T38–I58. The Extracellular segment spans residues S59–Y114. A helical membrane pass occupies residues Q115–W135. Topologically, residues K136 to S183 are cytoplasmic. The helical transmembrane segment at F184–V204 threads the bilayer. The Extracellular portion of the chain corresponds to D205–K272. The chain crosses the membrane as a helical span at residues I273–L293. At Y294 to T395 the chain is on the cytoplasmic side. Phosphoserine is present on residues S366 and S377. The residue at position 381 (Y381) is a Phosphotyrosine.

The protein belongs to the pannexin family. Heterooligomer of Inx2 (via cytoplasmic C-terminal region) and Inx3 (via cytoplasmic C-terminal region). In ovary, expressed in nurse cells and follicle cells. Expressed in embryonic epithelial cells. Ubiquitously expressed in stage 5 embryos. Expressed in foregut and hindgut from stage 11-17 and in proventriculus, epidermis and CNS in stage 16 embryos (at protein level). Expressed in anterior and ventral regions in stage 8 embryos. Repeating epidermal pattern emerges at stage 11, refines to one or two cells at each side of the segment borders by stage 13. Expressed in the imaginal wing disk. In pupae, expressed in the CNS and in secondary and tertiary pigment cells of the retina.

The protein resides in the cell membrane. It is found in the cell junction. Its subcellular location is the gap junction. The protein localises to the cytoplasm. It localises to the lateral cell membrane. The protein resides in the apicolateral cell membrane. In terms of biological role, structural components of the gap junctions. Essential for proper epithelial development of the epidermis. The polypeptide is Innexin inx3 (Inx3) (Drosophila melanogaster (Fruit fly)).